Here is a 278-residue protein sequence, read N- to C-terminus: Elongation factor Ts 2, mitochondrial (278 aa).

Belongs to the EF-Ts family.

It is found in the mitochondrion. Functionally, associates with the EF-Tu.GDP complex and induces the exchange of GDP to GTP. It remains bound to the aminoacyl-tRNA.EF-Tu.GTP complex up to the GTP hydrolysis stage on the ribosome. This Trypanosoma cruzi (strain CL Brener) protein is Elongation factor Ts 2, mitochondrial.